The chain runs to 378 residues: Putative glutamate--cysteine ligase 2 (378 aa).

Belongs to the glutamate--cysteine ligase type 2 family. YbdK subfamily.

It carries out the reaction L-cysteine + L-glutamate + ATP = gamma-L-glutamyl-L-cysteine + ADP + phosphate + H(+). In terms of biological role, ATP-dependent carboxylate-amine ligase which exhibits weak glutamate--cysteine ligase activity. This is Putative glutamate--cysteine ligase 2 from Pseudomonas paraeruginosa (strain DSM 24068 / PA7) (Pseudomonas aeruginosa (strain PA7)).